A 228-amino-acid polypeptide reads, in one-letter code: Carboxy-S-adenosyl-L-methionine synthase (228 aa).

S-adenosyl-L-methionine-binding positions include Y30, 55-57 (GSS), 79-80 (DN), and 103-104 (DV).

The protein belongs to the class I-like SAM-binding methyltransferase superfamily. Cx-SAM synthase family.

The enzyme catalyses prephenate + S-adenosyl-L-methionine = carboxy-S-adenosyl-L-methionine + 3-phenylpyruvate + H2O. In terms of biological role, catalyzes the conversion of S-adenosyl-L-methionine (SAM) to carboxy-S-adenosyl-L-methionine (Cx-SAM). This chain is Carboxy-S-adenosyl-L-methionine synthase, found in Staphylococcus epidermidis (strain ATCC 35984 / DSM 28319 / BCRC 17069 / CCUG 31568 / BM 3577 / RP62A).